A 434-amino-acid polypeptide reads, in one-letter code: Chaperone SurA (434 aa).

Positions 1–22 (MKPSKHLIFALFALAISQPTMA) are cleaved as a signal peptide. 2 PpiC domains span residues 173–274 (DVEY…KIMD) and 283–383 (IEEV…QLEE).

Its subcellular location is the periplasm. The catalysed reaction is [protein]-peptidylproline (omega=180) = [protein]-peptidylproline (omega=0). In terms of biological role, chaperone involved in the correct folding and assembly of outer membrane proteins. Recognizes specific patterns of aromatic residues and the orientation of their side chains, which are found more frequently in integral outer membrane proteins. May act in both early periplasmic and late outer membrane-associated steps of protein maturation. The chain is Chaperone SurA from Shewanella oneidensis (strain ATCC 700550 / JCM 31522 / CIP 106686 / LMG 19005 / NCIMB 14063 / MR-1).